The chain runs to 214 residues: Response regulator GacA (214 aa).

The 117-residue stretch at 3 to 119 (KVLVVDDHDL…EMVQAIRLVF (117 aa)) folds into the Response regulatory domain. Residue aspartate 54 is modified to 4-aspartylphosphate. The HTH luxR-type domain maps to 143–208 (NNSPFDLLSE…ELALLAVRHG (66 aa)). The segment at residues 167–186 (VQTISDKLCLSPKTVNTYRY) is a DNA-binding region (H-T-H motif).

Post-translationally, phosphorylated by LemA.

Its function is as follows. Forms part of a two-component regulatory system GacA/GacA(LemA). May be involved in lesion formation, swarming and in the production of extracellular protease, syringomycin and N-acyl-L-homoserine lactone (acyl-HSL). The polypeptide is Response regulator GacA (gacA) (Pseudomonas syringae pv. syringae (strain B728a)).